We begin with the raw amino-acid sequence, 345 residues long: MSTPTQLSYKDAGVDIDAGNALVDNIKSAVKRTHRPEVMGNLGGFGALCELPTKYKHPVLVSGTDGVGTKLRLAIDYQKHDSVGVDLVAMCVNDLIVAGAEPLFFLDYYATGKLDVATATSVVNGIAEGCAQSGCALIGGETAEMPGMYEGEDYDLAGFCVGVVEKEDVLDGSKVVAGDALIALGSSGPHSNGYSLIRKVLEVSKADPQQDLEGKPLIDHLLEPTKIYVKPLLKLLEKHDIHAMAHITGGGFWENIPRVLPNDAKAVVKGDSWQWPTVFNWLMENGNIAEFEMYRTFNCGVGMIIALPQDQVDAALTLLKAEGENAWLIGDIASRNGDEEQVEIC.

This sequence belongs to the AIR synthase family.

The protein localises to the cytoplasm. The catalysed reaction is 2-formamido-N(1)-(5-O-phospho-beta-D-ribosyl)acetamidine + ATP = 5-amino-1-(5-phospho-beta-D-ribosyl)imidazole + ADP + phosphate + H(+). The protein operates within purine metabolism; IMP biosynthesis via de novo pathway; 5-amino-1-(5-phospho-D-ribosyl)imidazole from N(2)-formyl-N(1)-(5-phospho-D-ribosyl)glycinamide: step 2/2. The chain is Phosphoribosylformylglycinamidine cyclo-ligase from Shewanella loihica (strain ATCC BAA-1088 / PV-4).